A 198-amino-acid polypeptide reads, in one-letter code: Regulation of enolase protein 1 (198 aa).

It localises to the cytoplasm. Its function is as follows. Functions in the galactose metabolic pathway via the GAL83 protein and that it may control the level of ENO1. The protein is Regulation of enolase protein 1 (REE1) of Saccharomyces cerevisiae (strain ATCC 204508 / S288c) (Baker's yeast).